The sequence spans 37 residues: Large ribosomal subunit protein bL36 (37 aa).

It belongs to the bacterial ribosomal protein bL36 family.

The sequence is that of Large ribosomal subunit protein bL36 (rpmJ) from Mycoplasmoides gallisepticum (strain R(low / passage 15 / clone 2)) (Mycoplasma gallisepticum).